The sequence spans 263 residues: Acyl-[acyl-carrier-protein]--UDP-N-acetylglucosamine O-acyltransferase (263 aa).

Belongs to the transferase hexapeptide repeat family. LpxA subfamily. As to quaternary structure, homotrimer.

The protein resides in the cytoplasm. The catalysed reaction is a (3R)-hydroxyacyl-[ACP] + UDP-N-acetyl-alpha-D-glucosamine = a UDP-3-O-[(3R)-3-hydroxyacyl]-N-acetyl-alpha-D-glucosamine + holo-[ACP]. Its pathway is glycolipid biosynthesis; lipid IV(A) biosynthesis; lipid IV(A) from (3R)-3-hydroxytetradecanoyl-[acyl-carrier-protein] and UDP-N-acetyl-alpha-D-glucosamine: step 1/6. Involved in the biosynthesis of lipid A, a phosphorylated glycolipid that anchors the lipopolysaccharide to the outer membrane of the cell. The chain is Acyl-[acyl-carrier-protein]--UDP-N-acetylglucosamine O-acyltransferase from Xanthomonas campestris pv. campestris (strain 8004).